Consider the following 144-residue polypeptide: Large ribosomal subunit protein uL15 (144 aa).

The disordered stretch occupies residues 1–57 (MKLNDLSPAPGSRREKHRPGRGIGSGLGKTGGRGHKGQTSRSGGSIAPGFEGGQQPL). Positions 21 to 31 (RGIGSGLGKTG) are enriched in gly residues.

The protein belongs to the universal ribosomal protein uL15 family. In terms of assembly, part of the 50S ribosomal subunit.

Its function is as follows. Binds to the 23S rRNA. This chain is Large ribosomal subunit protein uL15, found in Pseudomonas putida (strain ATCC 700007 / DSM 6899 / JCM 31910 / BCRC 17059 / LMG 24140 / F1).